The chain runs to 503 residues: AMP phosphorylase (503 aa).

AMP is bound by residues glycine 168, 194 to 199, and threonine 203; that span reads SRAITS. The active-site Proton donor is the aspartate 256. Residues serine 264 and lysine 288 each coordinate AMP.

Belongs to the thymidine/pyrimidine-nucleoside phosphorylase family. Type 2 subfamily.

It catalyses the reaction AMP + phosphate = alpha-D-ribose 1,5-bisphosphate + adenine. The catalysed reaction is CMP + phosphate = cytosine + alpha-D-ribose 1,5-bisphosphate. It carries out the reaction UMP + phosphate = alpha-D-ribose 1,5-bisphosphate + uracil. Its function is as follows. Catalyzes the conversion of AMP and phosphate to adenine and ribose 1,5-bisphosphate (R15P). Exhibits phosphorylase activity toward CMP and UMP in addition to AMP. Functions in an archaeal AMP degradation pathway, together with R15P isomerase and RubisCO. This is AMP phosphorylase from Pyrococcus furiosus (strain ATCC 43587 / DSM 3638 / JCM 8422 / Vc1).